The primary structure comprises 186 residues: Ribosome-recycling factor (186 aa).

It belongs to the RRF family.

The protein resides in the cytoplasm. Its function is as follows. Responsible for the release of ribosomes from messenger RNA at the termination of protein biosynthesis. May increase the efficiency of translation by recycling ribosomes from one round of translation to another. This is Ribosome-recycling factor from Chlorobium phaeobacteroides (strain DSM 266 / SMG 266 / 2430).